Reading from the N-terminus, the 587-residue chain is Serine/threonine-protein phosphatase 2A 65 kDa regulatory subunit A beta isoform (587 aa).

Serine 2 bears the N-acetylserine mark. HEAT repeat units follow at residues 2–42 (SMID…ALGE), 44–80 (RTRK…YVGG), 81–119 (VEYA…QMRE), 158–196 (DMLK…TVES), 197–235 (AHLK…LLEP), 236–274 (QDCV…AVGP), 275–313 (EPTR…ILNP), 315–352 (IAIQ…VLGK), 353–391 (DATI…VIGI), 393–430 (LLSQ…QLGV), 432–469 (FFDD…EFGP), 470–508 (EWAM…VMGS), 509–547 (EITC…IVDQ), and 549–586 (VVEK…VMMS).

Belongs to the phosphatase 2A regulatory subunit A family. As to quaternary structure, PP2A consists of a common heterodimeric core enzyme, composed of a 36 kDa catalytic subunit (subunit C) and a 65 kDa constant regulatory subunit (subunit A), that associates with a variety of regulatory subunits such as subunits B (the R2/B/PR55/B55, R3/B''/PR72/PR130/PR59 and R5/B'/B56 families). Interacts with B'THETA. Interacts with SRK2E/OST1. Interacts with SIC/RON3. Ubiquitous, with higher levels in roots and flowers (at protein level).

It localises to the cytoplasm. It is found in the cytosol. The protein resides in the nucleus. Its subcellular location is the peroxisome. Functionally, the A subunit of protein phosphatase 2A serves as a scaffolding molecule to coordinate the assembly of the catalytic subunit and a variable regulatory B subunit. Involved during developmental process such as seedling and floral developments. Seems to act as a negative regulator of PP2A catalytic activity. Associates with the serine/threonine-protein phosphatase PP2A catalytic subunit C and regulatory subunit B' to positively regulates beta-oxidation of fatty acids and protoauxins in peroxisomes by dephosphorylating peroxisomal beta-oxidation-related proteins. In Arabidopsis thaliana (Mouse-ear cress), this protein is Serine/threonine-protein phosphatase 2A 65 kDa regulatory subunit A beta isoform (PP2AA2).